Consider the following 360-residue polypeptide: DNA replication and repair protein RecF (360 aa).

An ATP-binding site is contributed by 30–37 (GHNGSGKT).

This sequence belongs to the RecF family.

It localises to the cytoplasm. In terms of biological role, the RecF protein is involved in DNA metabolism; it is required for DNA replication and normal SOS inducibility. RecF binds preferentially to single-stranded, linear DNA. It also seems to bind ATP. This is DNA replication and repair protein RecF from Actinobacillus pleuropneumoniae serotype 5b (strain L20).